The chain runs to 106 residues: Cytochrome c2 (106 aa).

Heme c contacts are provided by cysteine 19, cysteine 22, histidine 23, and methionine 84.

Belongs to the cytochrome c family. In terms of processing, binds 1 heme c group covalently per subunit.

The sequence is that of Cytochrome c2 from Rhodopila globiformis (Rhodopseudomonas globiformis).